Consider the following 534-residue polypeptide: MVKPLGEGTRDVSNVGCKSVDLLLASLGGLAAAVAAAYAGELLLRRRKLDQGASMGYKDVKIAPLIERKDSGRRSNLERFSHYVARQLGFEDPNEYPQLCKLANGYLLKTKGYDENVDEYLENEAERDSLYVHLLEEFDRCILTYFSFNWTQSSNLISQALSDESDQKVPKLKDFVMAATRKQRFERVTKDLKVKRVISTLVEEMRVIGSGSSEPHCTEVMSPVAHNKRSPVLLLMGGGMGAGKSTVLKDIFLESFWSEAQADAVVIEADAFKETDVIYRALSSRGHHDDMLQTAELVHQSSTDAASSLLVTALNDGRDVIMDGTLSWEPFVEQMIEMARNVHKQKYRMGEGYKVSEEGTITEKYWEEEEEETKENGKQQNLKPYRIELVGVVCDAYLAVARGIRRALMVKRAVRVKPQLNSHKRFANAFPKYCELVDNARLYCTNAVGGPPRLIAWKDGNSKLLVDPEDIDCLKRVSSLNPDAESIYELYPDPSQLSKPGSVWNDVVLVPSRPKVQKELSDAIRRIEKAQPKN.

The calmodulin-binding stretch occupies residues 167-196 (QKVPKLKDFVMAATRKQRFERVTKDLKVKR). An ATP-binding site is contributed by 238–245 (GGMGAGKS).

Interacts with calmodulin (CaM) in a calcium Ca(2+)-dependent manner in vitro. The cofactor is Ca(2+).

It is found in the mitochondrion outer membrane. The enzyme catalyses NAD(+) + ATP = ADP + NADP(+) + H(+). Its function is as follows. Phosphorylates NAD(+) to produce NADP(+) in a calmodulin calcium-dependent manner. Does not possess activity toward NADH. Has broad specificity for the phosphoryl donor, as ATP, CTP, GTP and UTP can be used interchangeably and produce similar efficiencies. May play a role in producing NADP(H) needed to regulate the elicitor-induced reactive oxygen species (ROS) burst by sustaining the activity of NADPH oxidases. Does not seem to play a role in photosynthesis-driven growth. In Arabidopsis thaliana (Mouse-ear cress), this protein is Calmodulin calcium-dependent NAD kinase.